Here is a 224-residue protein sequence, read N- to C-terminus: Cytidylate kinase (224 aa).

Position 11–19 (11–19 (GPAAAGKST)) interacts with ATP.

This sequence belongs to the cytidylate kinase family. Type 1 subfamily.

The protein resides in the cytoplasm. It catalyses the reaction CMP + ATP = CDP + ADP. The catalysed reaction is dCMP + ATP = dCDP + ADP. The sequence is that of Cytidylate kinase from Listeria welshimeri serovar 6b (strain ATCC 35897 / DSM 20650 / CCUG 15529 / CIP 8149 / NCTC 11857 / SLCC 5334 / V8).